The chain runs to 272 residues: U11/U12 small nuclear ribonucleoprotein 35 kDa protein (272 aa).

The RRM domain occupies 51–129 (LTLFVSRLSP…REVFVDFELE (79 aa)). Composition is skewed to basic and acidic residues over residues 146–162 (GKKESGQLRFGGRDRPF) and 190–272 (RDRS…EHNR). The interval 146 to 272 (GKKESGQLRF…RKHRSDEHNR (127 aa)) is disordered. A coiled-coil region spans residues 221 to 258 (TKDDKEQNAEHTKRERSREQAKNDKDKEKKDSKRERSR).

Its subcellular location is the nucleus. This chain is U11/U12 small nuclear ribonucleoprotein 35 kDa protein (snrnp35), found in Xenopus laevis (African clawed frog).